Here is a 698-residue protein sequence, read N- to C-terminus: Elongation factor G 1 (698 aa).

The tr-type G domain occupies 8–290; sequence ERYRNIGICA…AVVEFLPAPV (283 aa). GTP is bound by residues 17 to 24, 88 to 92, and 142 to 145; these read AHVDAGKT, DTPGH, and NKMD.

The protein belongs to the TRAFAC class translation factor GTPase superfamily. Classic translation factor GTPase family. EF-G/EF-2 subfamily.

It is found in the cytoplasm. In terms of biological role, catalyzes the GTP-dependent ribosomal translocation step during translation elongation. During this step, the ribosome changes from the pre-translocational (PRE) to the post-translocational (POST) state as the newly formed A-site-bound peptidyl-tRNA and P-site-bound deacylated tRNA move to the P and E sites, respectively. Catalyzes the coordinated movement of the two tRNA molecules, the mRNA and conformational changes in the ribosome. The sequence is that of Elongation factor G 1 from Shewanella oneidensis (strain ATCC 700550 / JCM 31522 / CIP 106686 / LMG 19005 / NCIMB 14063 / MR-1).